The primary structure comprises 207 residues: Casparian strip membrane protein 1 (207 aa).

Over residues 1 to 12 (MEADSTTINVTE) the composition is skewed to polar residues. Residues 1–20 (MEADSTTINVTETPKERKGK) are disordered. At 1–48 (MEADSTTINVTETPKERKGKAPLLAAPPASSGVKRVLQKAPKGGYKRG) the chain is on the cytoplasmic side. The chain crosses the membrane as a helical span at residues 49–69 (LAVFDVVLRLAGIATALGAAI). Over 70 to 98 (AMGSTDQTLPFFTQFFQFKAEFDDLPAFT) the chain is Extracellular. The chain crosses the membrane as a helical span at residues 99-119 (FFVIANAITAAYLALTIPISI). Over 120–131 (VCIIRPHLVAPR) the chain is Cytoplasmic. A helical membrane pass occupies residues 132–152 (VLLIFLDTVMVALTTAAAGGT). The Extracellular segment spans residues 153-184 (ASIVYLAHNGNSDANWPAICQQFNDXCQKVSG). Residues 185–205 (AVVASFLTVVVLMLLIVLSAF) traverse the membrane as a helical segment. Topologically, residues 206–207 (AL) are cytoplasmic.

Belongs to the Casparian strip membrane proteins (CASP) family. Homodimer and heterodimers.

It is found in the cell membrane. Regulates membrane-cell wall junctions and localized cell wall deposition. Required for establishment of the Casparian strip membrane domain (CSD) and the subsequent formation of Casparian strips, a cell wall modification of the root endodermis that determines an apoplastic barrier between the intraorganismal apoplasm and the extraorganismal apoplasm and prevents lateral diffusion. The sequence is that of Casparian strip membrane protein 1 from Cynara cardunculus var. scolymus (Globe artichoke).